Consider the following 366-residue polypeptide: Homer protein homolog 1 (366 aa).

The residue at position 2 (Gly2) is an N-acetylglycine. One can recognise a WH1 domain in the interval Gly2–Ala110. The disordered stretch occupies residues Lys114–Ser189. Polar residues-rich tracts occupy residues Ser138–Gly147 and Asp155–Ala170. Residues Lys193–Glu364 adopt a coiled-coil conformation. The segment at Lys302–Ser366 is required for tetramerization. Ser318 is modified (phosphoserine).

Belongs to the Homer family. As to quaternary structure, tetramer; this tetrameric structure is critical for forming the high-order complex with SHANK1, which in turn is necessary for the structural and functional integrity of dendritic spines. Isoform 1, isoform 2 and isoform 3 encode a coiled-coil structure that mediates homo- and heteromultimerization. Interacts with GRM1, GRM5, ITPR1, DNM3, RYR1, RYR2 and SHANK3. Interacts with IFT57 and OPHN1. Interacts with SHANK1; forms high-order polymerized complex with a mesh-like network structure, at least composed of SHANK1, HOMER1 and DLGAP1; the complex formation is SHANK1 multimerization dependent. Interacts with NFATC4. Interacts with DAGLA (via PPXXF motif); this interaction is required for the cell membrane localization of DAGLA. Interacts with SRGAP2. As to expression, expressed in skeletal muscle at the level of the Z line, in the forebrain and cerebellum. Expressed in cardiac and skeletal muscle. In terms of tissue distribution, expressed in the hippocampus. As to expression, expressed in skeletal muscle at the level of the Z line, in the heart, forebrain and cerebellum.

It is found in the cytoplasm. Its subcellular location is the postsynaptic density. The protein localises to the synapse. The protein resides in the cell projection. It localises to the dendritic spine. Functionally, postsynaptic density scaffolding protein. Binds and cross-links cytoplasmic regions of GRM1, GRM5, ITPR1, DNM3, RYR1, RYR2, SHANK1 and SHANK3. By physically linking GRM1 and GRM5 with ER-associated ITPR1 receptors, it aids the coupling of surface receptors to intracellular calcium release. May also couple GRM1 to PI3 kinase through its interaction with AGAP2. Isoform 1 regulates the trafficking and surface expression of GRM5. Differentially regulates the functions of the calcium activated channel ryanodine receptors RYR1 and RYR2. Isoform 1 decreases the activity of RYR2, and increases the activity of RYR1, whereas isoform 5 counteracts the effects by competing for binding sites. Isoform 3 regulates the trafficking and surface expression of GRM5. Isoform 5 acts as a natural dominant negative, in dynamic competition with constitutively expressed isoform 1, isoform 2 and isoform 3 to regulate synaptic metabotropic glutamate function. Isoform 5, may be involved in the structural changes that occur at synapses during long-lasting neuronal plasticity and development. Forms a high-order complex with SHANK1, which in turn is necessary for the structural and functional integrity of dendritic spines. Negatively regulates T cell activation by inhibiting the calcineurin-NFAT pathway. Acts by competing with calcineurin/PPP3CA for NFAT protein binding, hence preventing NFAT activation by PPP3CA. This chain is Homer protein homolog 1, found in Mus musculus (Mouse).